The sequence spans 267 residues: 4-hydroxy-tetrahydrodipicolinate reductase (267 aa).

Residues 8–13 and Glu34 contribute to the NAD(+) site; that span reads GAAGRM. Arg35 provides a ligand contact to NADP(+). Residues 98–100 and 122–125 contribute to the NAD(+) site; these read GST and APNM. His155 acts as the Proton donor/acceptor in catalysis. His156 contributes to the (S)-2,3,4,5-tetrahydrodipicolinate binding site. Catalysis depends on Lys159, which acts as the Proton donor. (S)-2,3,4,5-tetrahydrodipicolinate is bound at residue 165–166; that stretch reads GT.

It belongs to the DapB family.

It is found in the cytoplasm. The enzyme catalyses (S)-2,3,4,5-tetrahydrodipicolinate + NAD(+) + H2O = (2S,4S)-4-hydroxy-2,3,4,5-tetrahydrodipicolinate + NADH + H(+). The catalysed reaction is (S)-2,3,4,5-tetrahydrodipicolinate + NADP(+) + H2O = (2S,4S)-4-hydroxy-2,3,4,5-tetrahydrodipicolinate + NADPH + H(+). It participates in amino-acid biosynthesis; L-lysine biosynthesis via DAP pathway; (S)-tetrahydrodipicolinate from L-aspartate: step 4/4. Its function is as follows. Catalyzes the conversion of 4-hydroxy-tetrahydrodipicolinate (HTPA) to tetrahydrodipicolinate. The protein is 4-hydroxy-tetrahydrodipicolinate reductase of Pelobacter propionicus (strain DSM 2379 / NBRC 103807 / OttBd1).